A 350-amino-acid polypeptide reads, in one-letter code: GTPase Obg (350 aa).

Positions 1 to 175 (MFVDNIRIFA…GVFFMELRRI (175 aa)) constitute an Obg domain. The 170-residue stretch at 176-345 (ADAGLVGYPN…LRNRLDELVG (170 aa)) folds into the OBG-type G domain. GTP contacts are provided by residues 182–189 (GYPNAGKS), 207–211 (FTTLQ), 229–232 (DIPG), 299–302 (NKMD), and 326–328 (SAL). Ser189 and Thr209 together coordinate Mg(2+).

Belongs to the TRAFAC class OBG-HflX-like GTPase superfamily. OBG GTPase family. In terms of assembly, monomer. Requires Mg(2+) as cofactor.

Its subcellular location is the cytoplasm. Functionally, an essential GTPase which binds GTP, GDP and possibly (p)ppGpp with moderate affinity, with high nucleotide exchange rates and a fairly low GTP hydrolysis rate. Plays a role in control of the cell cycle, stress response, ribosome biogenesis and in those bacteria that undergo differentiation, in morphogenesis control. The polypeptide is GTPase Obg (Akkermansia muciniphila (strain ATCC BAA-835 / DSM 22959 / JCM 33894 / BCRC 81048 / CCUG 64013 / CIP 107961 / Muc)).